The primary structure comprises 296 residues: Endonuclease 5 (296 aa).

The signal sequence occupies residues methionine 1–cysteine 20. Tryptophan 21 and histidine 26 together coordinate a divalent metal cation. Tryptophan 21–histidine 26 contacts substrate. A disulfide bridge links cysteine 30 with cysteine 62. Residues aspartate 66 and histidine 81 each contribute to the a divalent metal cation site. Substrate is bound by residues aspartate 66 to serine 72, histidine 81 to asparagine 84, and asparagine 91 to arginine 96. 3 disulfide bridges follow: cysteine 90-cysteine 243, cysteine 98-cysteine 108, and cysteine 223-cysteine 230. Substrate contacts are provided by asparagine 115 and tyrosine 133. Asparagine 115 carries an N-linked (GlcNAc...) asparagine glycan. Asparagine 134 carries N-linked (GlcNAc...) asparagine glycosylation. A divalent metal cation contacts are provided by histidine 144, aspartate 148, and histidine 154. The interval histidine 144 to tyrosine 193 is substrate binding. A glycan (N-linked (GlcNAc...) asparagine) is linked at asparagine 173. Histidine 178 and aspartate 182 together coordinate a divalent metal cation. Asparagine 195 carries an N-linked (GlcNAc...) asparagine glycan. A propeptide spans alanine 281–leucine 296 (removed in mature form).

The protein belongs to the nuclease type I family. In terms of assembly, monomer. It depends on Zn(2+) as a cofactor.

It catalyses the reaction Endonucleolytic cleavage to 5'-phosphomononucleotide and 5'-phosphooligonucleotide end-products.. Its function is as follows. Hydrolyzes, with low efficiency, only single-stranded DNA and RNA without apparent specificity for bases. Endonuclease that recognizes and cleaves some mismatches with high efficiency, including heteroduplex double-stranded DNA; mostly efficient on T/G, A/G and G/G mismatches, less efficient for T/T and poorly efficient for C/C, A/A, T/C and A/C. The sequence is that of Endonuclease 5 from Arabidopsis thaliana (Mouse-ear cress).